The sequence spans 89 residues: Large ribosomal subunit protein eL34 (89 aa).

The disordered stretch occupies residues 1–32; it reads MPAPRFKSGSFKKISKRGPGNKTLTHHRRSKV.

The protein belongs to the eukaryotic ribosomal protein eL34 family.

The protein is Large ribosomal subunit protein eL34 of Methanococcus aeolicus (strain ATCC BAA-1280 / DSM 17508 / OCM 812 / Nankai-3).